The following is a 175-amino-acid chain: Large ribosomal subunit protein uL22y (175 aa).

Basic and acidic residues predominate over residues 153–163; the sequence is EKEEPVKKEPE. A disordered region spans residues 153 to 175; it reads EKEEPVKKEPETQLAAKSKKSAA.

The protein belongs to the universal ribosomal protein uL22 family.

This chain is Large ribosomal subunit protein uL22y (RPL17B), found in Arabidopsis thaliana (Mouse-ear cress).